Here is a 472-residue protein sequence, read N- to C-terminus: Glutamate--tRNA ligase (472 aa).

A 'HIGH' region motif is present at residues 7 to 17 (PSPTGFLHVGG). 4 residues coordinate Zn(2+): Cys96, Cys98, Cys123, and His125. Positions 112–129 (ARKEKPRYDGRCRHRSEP) are enriched in basic and acidic residues. The segment at 112–134 (ARKEKPRYDGRCRHRSEPPSDQP) is disordered. A 'KMSKS' region motif is present at residues 234 to 238 (KLSKR). ATP is bound at residue Lys237.

It belongs to the class-I aminoacyl-tRNA synthetase family. Glutamate--tRNA ligase type 1 subfamily. Monomer. The cofactor is Zn(2+).

It localises to the cytoplasm. The enzyme catalyses tRNA(Glu) + L-glutamate + ATP = L-glutamyl-tRNA(Glu) + AMP + diphosphate. Catalyzes the attachment of glutamate to tRNA(Glu) in a two-step reaction: glutamate is first activated by ATP to form Glu-AMP and then transferred to the acceptor end of tRNA(Glu). The protein is Glutamate--tRNA ligase of Magnetococcus marinus (strain ATCC BAA-1437 / JCM 17883 / MC-1).